A 265-amino-acid chain; its full sequence is DNA-binding dual transcriptional regulator Rns (265 aa).

2 residues coordinate decanoate: His20 and Arg75. In terms of domain architecture, HTH araC/xylS-type spans Asp164–Tyr261. 2 consecutive DNA-binding regions (H-T-H motif) follow at residues Gly181–Asn202 and Ile228–Tyr251.

Homodimer; each subunit binds one decanoate molecule.

The protein localises to the cytoplasm. Its activity is regulated as follows. Rns-dependent expression of pilins and outer membrane proteins CexE-alpha and CexE-epsilon are inhibited in vivo by decanoic acid (decanoate); has no effect on expression of DnaK or flagellins. Decanoate relieves Rns-dependent repression of nlpA. In terms of biological role, a transcription factor required for the expression of the CS1 and CS2 adhesins of enterotoxigenic E.coli. Required for expression of pilins and some outer membrane lipoproteins. Represses expression of nlpA. The chain is DNA-binding dual transcriptional regulator Rns from Escherichia coli.